A 421-amino-acid chain; its full sequence is MRTQNNLTVEVDCHSLGSNECPSMTSSFSPMDSPTPTPTSIYSQGSLASPGWQDAGSYPGHAYERHTGATPMRSAFRLAGMTSNENMGMSYGAMEAQERMPMPDFLSAYDDNVEHFWLPSDGPKTYETGTHSLPYPHTLPQCPPMVRSNYRPHAAYLPEAATNPCLSRSIFHHAERVPQSMSMGNMMPWIPQATESIAPQTIAPSQVGPVTPPPSYSEFPTSIQTFKTHSPTTPLRSCSIGTASGPDTPISRLSGGAADYLEDFQQSPPFRDGLNRLQRQPSRKMIRKQSSRQNMSLENLPSIIKQVQFKCKEPGCKGRFKRQEHLKRHMKSHSKEKPHVCWVPGCERAFSRSDNLNAHYTKTHSKRGGRNRYVATLDESSPDYDPDFRGQLTPDGLPIRGSTLDDPMPNSREYSVDGLDD.

2 C2H2-type zinc fingers span residues 309–333 (FKCK…MKSH) and 339–364 (HVCW…TKTH). The disordered stretch occupies residues 379–421 (ESSPDYDPDFRGQLTPDGLPIRGSTLDDPMPNSREYSVDGLDD).

Its subcellular location is the nucleus. Functionally, brlA, abaA and wetA are pivotal regulators of conidiophore development and conidium maturation. They act individually and together to regulate their own expression and that of numerous other sporulation-specific genes. Binds promoters of target genes at brlA response elements (BREs) containing the conserved sequence 5'-(C/A)(A/G)AGGG(G/A)-3'. Required for conidiophores formation. Controls expression of abaA. The polypeptide is C2H2 type master regulator of conidiophore development brlA (Aspergillus oryzae (strain ATCC 42149 / RIB 40) (Yellow koji mold)).